Consider the following 1755-residue polypeptide: E3 ubiquitin-protein ligase UBR2 (1755 aa).

An N-acetylalanine modification is found at alanine 2. A Glycyl lysine isopeptide (Lys-Gly) (interchain with G-Cter in ubiquitin) cross-link involves residue lysine 94. The UBR-type zinc finger occupies 97–168; it reads HLCGRVFKVG…EGPYCQKHKL (72 aa). Positions 99, 112, 115, 124, 127, 133, and 136 each coordinate Zn(2+). Phenylalanine 148 lines the a peptide pocket. A Zn(2+)-binding site is contributed by cysteine 149. Aspartate 150 lines the a peptide pocket. Cysteine 151 provides a ligand contact to Zn(2+). Residue aspartate 153 participates in a peptide binding. Residue lysine 158 forms a Glycyl lysine isopeptide (Lys-Gly) (interchain with G-Cter in ubiquitin) linkage. Zn(2+) is bound at residue cysteine 163. Lysine 165 is covalently cross-linked (Glycyl lysine isopeptide (Lys-Gly) (interchain with G-Cter in ubiquitin)). Histidine 166 is a binding site for Zn(2+). Glycyl lysine isopeptide (Lys-Gly) (interchain with G-Cter in ubiquitin) cross-links involve residues lysine 248, lysine 255, and lysine 470. Serine 476 bears the Phosphoserine mark. Residues lysine 488, lysine 568, lysine 779, and lysine 789 each participate in a glycyl lysine isopeptide (Lys-Gly) (interchain with G-Cter in ubiquitin) cross-link. A disordered region spans residues 1012–1033; that stretch reads AEAEGTIMEESSRDKDKAERKR. Residues 1019–1054 are a coiled coil; the sequence is MEESSRDKDKAERKRKAEIARLRREKIMAQMSEMQR. The span at 1021–1033 shows a compositional bias: basic and acidic residues; it reads ESSRDKDKAERKR. 8 residues coordinate Zn(2+): cysteine 1108, cysteine 1111, cysteine 1168, histidine 1170, histidine 1173, cysteine 1176, cysteine 1210, and cysteine 1213. An RING-type; atypical zinc finger spans residues 1108 to 1214; the sequence is CILCQEEQEV…NGEFLCPLCE (107 aa). Glycyl lysine isopeptide (Lys-Gly) (interchain with G-Cter in ubiquitin) cross-links involve residues lysine 1496, lysine 1599, and lysine 1689. A Phosphoserine modification is found at serine 1694. Tyrosine 1697 carries the phosphotyrosine modification.

The protein belongs to the E3 ubiquitin-protein ligase UBR1-like family. In terms of assembly, interacts with UBE2B; promotes the UBE2B-H2A interaction and the ubiquitination of histone H2A by UBE2B and UBR2. Interacts with RECQL4. Interacts with Tex19.1 and Tex19.2; does not lead to Tex19.1 degradation and stabilizes it. Interacts with L1RE1. Interacts with CASP8. Interacts with ATXN3. Interacts with UBE2O. In terms of processing, dephosphorylated by DUSP22 at Ser-1694 and Tyr-1697, leading to subsequent ubiquitination and proteasomal degradation. 'Lys-48'-linked ubiquitinated at Lys-94, Lys-779 and Lys-1599 following DUSP22-mediated dephosphorylation of Ser-1694 and Tyr-1697 which promotes UBR2 interaction with the SCF(FBW1A) E3 ubiquitin-protein ligase complex. Highly expressed in skeletal muscle. Also expressed in heart, kidney and testis. Expressed in acinar cells of the pancreas. In testes, expressed primarily in spermatocytes. Expressed in cerebellum.

Its subcellular location is the nucleus. It is found in the chromosome. It catalyses the reaction S-ubiquitinyl-[E2 ubiquitin-conjugating enzyme]-L-cysteine + [acceptor protein]-L-lysine = [E2 ubiquitin-conjugating enzyme]-L-cysteine + N(6)-ubiquitinyl-[acceptor protein]-L-lysine.. Its pathway is protein modification; protein ubiquitination. Its function is as follows. E3 ubiquitin-protein ligase which is a component of the N-end rule pathway. Recognizes and binds to proteins bearing specific N-terminal residues (N-degrons) that are destabilizing according to the N-end rule, leading to their ubiquitination and subsequent degradation. Recognizes both type-1 and type-2 N-degrons, containing positively charged amino acids (Arg, Lys and His) and bulky and hydrophobic amino acids, respectively. Does not ubiquitinate proteins that are acetylated at the N-terminus. In contrast, it strongly binds methylated N-degrons. Plays a critical role in chromatin inactivation and chromosome-wide transcriptional silencing during meiosis via ubiquitination of histone H2A. Binds leucine and is a negative regulator of the leucine-mTOR signaling pathway, thereby controlling cell growth. Required for spermatogenesis, promotes, with Tex19.1, SPO11-dependent recombination foci to accumulate and drive robust homologous chromosome synapsis. Polyubiquitinates LINE-1 retrotransposon encoded, LIRE1, which induces degradation, inhibiting LINE-1 retrotransposon mobilization. Catalyzes ubiquitination and degradation of the N-terminal part of NLRP1B following NLRP1B activation by pathogens and other damage-associated signals: ubiquitination promotes degradation of the N-terminal part and subsequent release of the cleaved C-terminal part of NLRP1B, which polymerizes and forms the NLRP1B inflammasome followed by host cell pyroptosis. Plays a role in T-cell receptor signaling by inducing 'Lys-63'-linked ubiquitination of lymphocyte cell-specific kinase LCK. This activity is regulated by DUSP22, which induces 'Lys-48'-linked ubiquitination of UBR2, leading to its proteasomal degradation by SCF E3 ubiquitin-protein ligase complex. This chain is E3 ubiquitin-protein ligase UBR2, found in Mus musculus (Mouse).